Here is a 1360-residue protein sequence, read N- to C-terminus: MAYTTKVNGCAAEKADGVLNGDHNKEKKDPYFVETPYGFQLDLDFVKYVDDIQKGNTIKKLNIQKRRKPSVPCPEVRAIPGHQGVWTSTESLSSSNSDDSKQCPSFLLARSHVTSTPIPRPPAPLETSPTFAVSENRQLLPPPSPQLPRHNLHVTKTLMETRRRLEQERVTMQMAPGDFRRPRLASFGGMGSTSSLPSFVGSANHSSAIHQLQNGYQGNGDYNSYVPAAPTTSSMGSSVRHSPLSSGISTPVTNVSPMHLQHIREQMAIALKRLKELEEQVRTIPVLQVKISVLQEEKRQLASQLKSQRASSQNEACGVRKRSYSAGNASQLELLARARRGGGELYIDYEEEEMESVEQSTQRIQEFRQLTADMQALERKIQDSSCEVASELRENGQCPSRECKSVAVGSDENMNDVVVYHRDLRPCKDTAVGTVTETRNVGISVTEAMLGVITEADKEIELQQQTIEALKEKIYRLEVQLKETTHDREMTKLKQELQAAGSRKKVDKATMAQPLVFSKLVEALVPTRDQMVGSHVDTRESCVGTSVQTSSVGTSCHPDCKNQVVGSELPMNWWVVKERVAMHDQCVGRSVETCDRSVGVEVSVCETGSNTEASGSDLTLLKTNLNLKDVRSIGCGDCSVDVIVCFPKECTSRSMNTEAVGQEEAAVMAVPHTTDQHTSTNLERVDQCTNTEAATLVESCTNTLLSTMDKQTSTQTVEMRTVAIGEGRVRDINPSTKTRSVGVGTVLSGNSEFDRPCAVKTKESGVGQINIQDNYLVGLKMRTIACGPPQLTVGLMGSRRSVGVGNEPVGELPEESPQPRVASGMVTGLDHYIERVQRLLAEQQTLLAENYSELAEAFGEPHSQIGSLNSQLISTLSSINSVMKSASTEELRNSDFQKASLGKTTGNHLEYTCKCGGLRSGGLLNVQPSQPEVEAETAEGKHSRGHEQFPMQGSTLPPVNLTDDQIATGLYVCPNNENTLKSIMKKSDGNKDSNGAKKNLQFIGINGGYETTSSDESSSDGSSSSESDDECDTIGYPPEEEEEEEEKDHDTRGMAEGHHAVNIEGFKSARVEDEVQVPECEPEKEEIRERYELSEKMLSACNLLKYNIKDPKALASKDMRICLNTLQHDWFRVSSQKSAVPAMVGDYIAAFEAVSPDVLRYIINMADGNGNTALHYSVSHSNFQIVKLLLDADVCNVDHQNKAGYTPIMLAALAAVEAEKDMQVVEELFSCGDVNAKASQAGQTALMLAVSHGRIDMVKGLLACGADVNIQDDEGSTALMCASEHGHVEIVKLLLAQPGCNGHLEDNDGSTALSIALEAGHKDIAVLLYAHLNFSKAQSPSTPRLGRKTSPGPTHRGSFD.

The KN motif; Interaction with TLN1 stretch occupies residues 30 to 68; that stretch reads PYFVETPYGFQLDLDFVKYVDDIQKGNTIKKLNIQKRRK. The Important for binding to TLN1 signature appears at 41-44; it reads LDLD. The Nuclear export signal 1 (NES 1) signature appears at 43–52; the sequence is LDFVKYVDDI. The short motif at 65 to 68 is the Nuclear localization signal 1 (NLS 1) element; sequence KRRK. Residues 66 to 103 are disordered; it reads RRKPSVPCPEVRAIPGHQGVWTSTESLSSSNSDDSKQC. Low complexity predominate over residues 88–103; the sequence is STESLSSSNSDDSKQC. The Nuclear export signal 2 (NES 2) motif lies at 125–134; sequence LETSPTFAVS. At Ser-186 the chain carries Phosphoserine. A disordered region spans residues 221-253; that stretch reads DYNSYVPAAPTTSSMGSSVRHSPLSSGISTPVT. Polar residues predominate over residues 230-253; sequence PTTSSMGSSVRHSPLSSGISTPVT. Positions 244–339 are interaction with PPFIBP1; the sequence is LSSGISTPVT…SQLELLARAR (96 aa). Positions 260–311 form a coiled coil; the sequence is LQHIREQMAIALKRLKELEEQVRTIPVLQVKISVLQEEKRQLASQLKSQRAS. Ser-325 carries the phosphoserine modification. Coiled coils occupy residues 367 to 394 and 453 to 487; these read FRQL…ELRE and ITEA…TTHD. The Nuclear export signal 3 (NES 3) signature appears at 618–627; the sequence is LTLLKTNLNL. Disordered stretches follow at residues 929 to 954 and 983 to 1053; these read SQPE…MQGS and IMKK…DTRG. Composition is skewed to basic and acidic residues over residues 938–947 and 985–995; these read AEGKHSRGHE and KKSDGNKDSNG. The Nuclear localization signal 2 (NLS 2) signature appears at 985–998; that stretch reads KKSDGNKDSNGAKK. A compositionally biased stretch (low complexity) spans 1010 to 1025; the sequence is ETTSSDESSSDGSSSS. Residues 1026 to 1047 show a composition bias toward acidic residues; it reads ESDDECDTIGYPPEEEEEEEEK. The interaction with KIF21A stretch occupies residues 1081-1360; sequence EPEKEEIRER…PGPTHRGSFD (280 aa). An ANK 0; degenerate repeat occupies 1117 to 1154; it reads KDMRICLNTLQHDWFRVSSQKSAVPAMVGDYIAAFEAV. ANK repeat units follow at residues 1169–1199, 1203–1236, 1241–1270, 1274–1306, and 1308–1337; these read NGNT…NVDH, AGYT…DVNA, AGQT…DVNI, EGST…HLED, and DGST…FSKA. Positions 1337 to 1360 are disordered; it reads AQSPSTPRLGRKTSPGPTHRGSFD.

In terms of assembly, part of a cortical microtubule stabilization complex (CMSC) composed of KANK1, PPFIA1, PPFIBP1, ERC1/ELKS, PHLDB2/LL5beta, CLASPs, KIF21A and possibly additional interactors; within CMSCs KANK1 and PHLDB2/LL5beta appear to be the core components for targeting of microtubule-binding proteins KIF21A and CLASPs, whereas PPFIA1, PPFIBP1 and ERC1/ELKS serve as scaffolds for protein clustering. Interacts (via KN motif) with TLN1 (via R7 domain); this mediates CMSC clustering around focal adhesions. Interacts (via CC1 domain, residues 244-339) with PPFIBP1. Interacts (via ANK repeats 1-5) with KIF21A (via residues 1142-1169). Interacts with YWHAQ; the interaction requires KANK1 phosphorylation at Ser-325 and is enhanced by growth factor stimulation. Interacts with YWHAB, YWHAG, YWHAE, YWHAH, YWHAZ and SFN; the interaction requires KANK1 phosphorylation at Ser-325. Interacts with ARFGEF1; however, colocalization cannot be experimentally confirmed. Interacts with BAIAP2. Interacts with CTNNB1. Interacts (via coiled coil domain) with DAAM1 (via coiled coil domain).

It is found in the cytoplasm. The protein localises to the cell cortex. The protein resides in the cell projection. Its subcellular location is the ruffle membrane. It localises to the nucleus. Adapter protein that links structural and signaling protein complexes positioned to guide microtubule and actin cytoskeleton dynamics during cell morphogenesis. At focal adhesions (FAs) rims, organizes cortical microtubule stabilizing complexes (CMSCs) and directly interacts with major FA component TLN1, forming macromolecular assemblies positioned to control microtubule-actin crosstalk at the cell edge. Recruits KIF21A in CMSCs at axonal growth cones and regulates axon guidance by suppressing microtubule growth without inducing microtubule disassembly once it reaches the cell cortex. Interacts with ARFGEF1 and participates in establishing microtubule-organizing center (MTOC) orientation and directed cell movement in wound healing. Regulates actin stress fiber formation and cell migration by inhibiting RHOA activation in response to growth factors; this function involves phosphorylation through PI3K/Akt signaling and may depend on the competitive interaction with 14-3-3 adapter proteins to sequester them from active complexes. Inhibits the formation of lamellipodia but not of filopodia; this function may depend on the competitive interaction with BAIAP2 to block its association with activated RAC1. Inhibits fibronectin-mediated cell spreading; this function is partially mediated by BAIAP2. In the nucleus, is involved in beta-catenin-dependent activation of transcription. During cell division, may regulate DAAM1-dependent RHOA activation that signals centrosome maturation and chromosomal segregation. May also be involved in contractile ring formation during cytokinesis. Potential tumor suppressor for renal cell carcinoma. This chain is KN motif and ankyrin repeat domains 1, found in Mus musculus (Mouse).